Consider the following 339-residue polypeptide: Lipoate-protein ligase A (339 aa).

In terms of domain architecture, BPL/LPL catalytic spans 29–217 (PKKQSILFLW…AFFQHYGMKV (189 aa)). ATP-binding positions include R71, 76 to 79 (GAVF), and K135. K135 serves as a coordination point for (R)-lipoate.

Belongs to the LplA family. As to quaternary structure, monomer.

Its subcellular location is the cytoplasm. The enzyme catalyses L-lysyl-[lipoyl-carrier protein] + (R)-lipoate + ATP = N(6)-[(R)-lipoyl]-L-lysyl-[lipoyl-carrier protein] + AMP + diphosphate + H(+). Its pathway is protein modification; protein lipoylation via exogenous pathway; protein N(6)-(lipoyl)lysine from lipoate: step 1/2. The protein operates within protein modification; protein lipoylation via exogenous pathway; protein N(6)-(lipoyl)lysine from lipoate: step 2/2. Its function is as follows. Catalyzes both the ATP-dependent activation of exogenously supplied lipoate to lipoyl-AMP and the transfer of the activated lipoyl onto the lipoyl domains of lipoate-dependent enzymes. The polypeptide is Lipoate-protein ligase A (Blochmanniella pennsylvanica (strain BPEN)).